We begin with the raw amino-acid sequence, 2235 residues long: Mediator of RNA polymerase II transcription subunit 12 (2235 aa).

Over residues 16–35 the composition is skewed to low complexity; it reads SAIGGASARDSGRADSSSIG. 6 disordered regions span residues 16–80, 268–293, 835–858, 1900–1959, 2134–2160, and 2183–2202; these read SAIG…EENL, FPAQ…SPAS, SVKR…GCED, SSVT…SPAA, GSTA…AQGK, and WTLL…ASNS. The span at 280 to 293 shows a compositional bias: polar residues; that stretch reads MLYTGSMQKNSPAS. Over residues 1900 to 1916 the composition is skewed to polar residues; the sequence is SSVTNRSTTSNKQMGTA. The segment covering 1917–1927 has biased composition (low complexity); the sequence is SSGSEISSNKG. Positions 2134–2155 are enriched in polar residues; the sequence is GSTAAAGTNQRNSPAISKSGTA. Residues 2191–2202 are compositionally biased toward low complexity; the sequence is SSGLSSSNASNS.

This sequence belongs to the Mediator complex subunit 12 family. As to quaternary structure, component of the Mediator complex. In terms of tissue distribution, ubiquitous. Higher expression in vascular tissue, shoot apex and developing floral organs.

It localises to the nucleus. In terms of biological role, component of the Mediator complex, a coactivator involved in the regulated transcription of nearly all RNA polymerase II-dependent genes. Mediator functions as a bridge to convey information from gene-specific regulatory proteins to the basal RNA polymerase II transcription machinery. The Mediator complex, having a compact conformation in its free form, is recruited to promoters by direct interactions with regulatory proteins and serves for the assembly of a functional preinitiation complex with RNA polymerase II and the general transcription factors. Flowering regulator which suppresses FLC expression, promotes FT and TSF expression and up-regulates SOC1 and FUL mainly in an FT-dependent manner under long-day conditions. Involved in diverse developmental aspects through gene regulation and modulation of the auxin response. Acts closely together with MAB13. Involved in the regulation of embryo patterning and cotyledon organogenesis by transiently repressing a transcriptional program that interferes with this process. This is Mediator of RNA polymerase II transcription subunit 12 (MED12) from Arabidopsis thaliana (Mouse-ear cress).